We begin with the raw amino-acid sequence, 599 residues long: MTTPAPLTGLLPLNPEQLARLQAATTDLTPEQLAWVSGYFWGVLNPRSGAVAVTPAPEGKMPGVTLISASQTGNARRVAEALRDDLLAANLNVTLVNAGDYKFKQIASEKLLVIVTSTQGEGEPPEEAVALHKFLFSKKALKLENTAFAVFSLGDTSYEFFCQSGKDFDSKLAELGGERLLDRVDADVEYQAAASEWRARVVDVLKSRAPVAAPSQSVATGAVNDIHTSPYTKDAPLTATLSVNQKITGRNSEKDVRHIEIDLGDSGLRYQPGDALGVWYQNDPALVKELVELLWLKGDEPVTVDGKTLPLAEALEWHFELTVNTANIVENYATLTRSESLLPLVGDKAQLQHYAATTPIVDMVRFSPAQLDAQALIGLLRPLTPRLYSIASAQAEVESEVHITVGVVRYDIEGRARAGGASSFLAGRVEEEGEVRVFIEHNDNFRLPANPQTPVIMIGPGTGIAPFRAFMQQRAADGAEGKNWLFFGNPHFTEDFLYQVEWQRYVKEGVLNRIDLAWSRDQKEKIYVQDKLREQGAELWRWINDGAHIYVCGDARCMAVDVEKALLEVIAEFGAMDIESADEYLSELRVERRYQRDVY.

In terms of domain architecture, Flavodoxin-like spans 64 to 202 (VTLISASQTG…AASEWRARVV (139 aa)). FMN is bound by residues 70 to 75 (SQTGNA), 117 to 120 (STQG), and 153 to 162 (LGDTSYEFFC). The 215-residue stretch at 234 to 448 (DAPLTATLSV…IEHNDNFRLP (215 aa)) folds into the FAD-binding FR-type domain. FAD is bound by residues Thr322, Ala356, 386-389 (RLYS), 404-406 (TVG), Tyr410, and 419-422 (GGAS). NADP(+)-binding positions include 519 to 520 (SR), 525 to 529 (KIYVQ), and Asp561. Tyr599 serves as a coordination point for FAD.

Belongs to the NADPH-dependent sulphite reductase flavoprotein subunit CysJ family. The protein in the N-terminal section; belongs to the flavodoxin family. It in the C-terminal section; belongs to the flavoprotein pyridine nucleotide cytochrome reductase family. Alpha(8)-beta(8). The alpha component is a flavoprotein, the beta component is a hemoprotein. The cofactor is FAD. FMN is required as a cofactor.

The catalysed reaction is hydrogen sulfide + 3 NADP(+) + 3 H2O = sulfite + 3 NADPH + 4 H(+). Its pathway is sulfur metabolism; hydrogen sulfide biosynthesis; hydrogen sulfide from sulfite (NADPH route): step 1/1. Its function is as follows. Component of the sulfite reductase complex that catalyzes the 6-electron reduction of sulfite to sulfide. This is one of several activities required for the biosynthesis of L-cysteine from sulfate. The flavoprotein component catalyzes the electron flow from NADPH -&gt; FAD -&gt; FMN to the hemoprotein component. The protein is Sulfite reductase [NADPH] flavoprotein alpha-component of Salmonella paratyphi A (strain ATCC 9150 / SARB42).